The chain runs to 598 residues: N-acetylmuramoyl-L-alanine amidase (598 aa).

Residues 1 to 31 form the signal peptide; sequence MSPGNWKTTMVVRGILLILYGLLLQPEPGTA. 2 disordered regions span residues 172 to 194 and 212 to 233; these read SSAH…SPNV and STGV…KAKS. A Phosphoserine modification is found at serine 261. An N-linked (GlcNAc...) asparagine glycan is attached at asparagine 353. The N-acetylmuramoyl-L-alanine amidase domain occupies 428-554; it reads FLYIHHTYVP…RQLVRTDCPG (127 aa). A Zn(2+)-binding site is contributed by histidine 432. An intrachain disulfide couples cysteine 441 to cysteine 447. Asparagine 507 carries an N-linked (GlcNAc...) asparagine glycan. 2 residues coordinate Zn(2+): histidine 544 and cysteine 552.

It belongs to the N-acetylmuramoyl-L-alanine amidase 2 family. Requires Zn(2+) as cofactor.

It is found in the secreted. The protein resides in the membrane. The catalysed reaction is Hydrolyzes the link between N-acetylmuramoyl residues and L-amino acid residues in certain cell-wall glycopeptides.. May play a scavenger role by digesting biologically active peptidoglycan (PGN) into biologically inactive fragments. Has no direct bacteriolytic activity. In Sus scrofa (Pig), this protein is N-acetylmuramoyl-L-alanine amidase (PGLYRP2).